Here is an 86-residue protein sequence, read N- to C-terminus: uncharacterized protein (86 aa).

The interval 1–21 is disordered; it reads MLSNSTSRNRHSKHNKKNTRE. A compositionally biased stretch (basic residues) spans 8 to 17; that stretch reads RNRHSKHNKK.

This is an uncharacterized protein from Acidianus convivator (ATV).